Here is a 130-residue protein sequence, read N- to C-terminus: Large ribosomal subunit protein bL12c (130 aa).

This sequence belongs to the bacterial ribosomal protein bL12 family. Homodimer. Part of the ribosomal stalk of the 50S ribosomal subunit. Forms a multimeric L10(L12)X complex, where L10 forms an elongated spine to which 2 to 4 L12 dimers bind in a sequential fashion. Binds GTP-bound translation factors.

It localises to the plastid. Functionally, forms part of the ribosomal stalk which helps the ribosome interact with GTP-bound translation factors. Is thus essential for accurate translation. The chain is Large ribosomal subunit protein bL12c from Prototheca wickerhamii.